The chain runs to 337 residues: Glyceraldehyde-3-phosphate dehydrogenase (337 aa).

NADP(+) contacts are provided by residues 11 to 12 (TV), 34 to 35 (TR), and G110. A D-glyceraldehyde 3-phosphate-binding site is contributed by 139–141 (SCN). C140 (nucleophile) is an active-site residue. D171 lines the NADP(+) pocket. 194 to 195 (HG) lines the D-glyceraldehyde 3-phosphate pocket. Q300 serves as a coordination point for NADP(+).

This sequence belongs to the glyceraldehyde-3-phosphate dehydrogenase family. In terms of assembly, homotetramer.

Its subcellular location is the cytoplasm. It carries out the reaction D-glyceraldehyde 3-phosphate + phosphate + NADP(+) = (2R)-3-phospho-glyceroyl phosphate + NADPH + H(+). It catalyses the reaction D-glyceraldehyde 3-phosphate + phosphate + NAD(+) = (2R)-3-phospho-glyceroyl phosphate + NADH + H(+). It participates in carbohydrate degradation; glycolysis; pyruvate from D-glyceraldehyde 3-phosphate: step 1/5. In terms of biological role, exhibits a dual-cofactor specificity, with a marked preference for NADP(+) over NAD(+). In Methanothermus fervidus, this protein is Glyceraldehyde-3-phosphate dehydrogenase (gap).